A 3801-amino-acid chain; its full sequence is Lysosomal-trafficking regulator (3801 aa).

Residues 148-173 (KITHRYSVRDARKTQLSTSDSEANSD) are disordered. Phosphoserine is present on Ser164. Thr165 carries the post-translational modification Phosphothreonine. Ser166 is modified (phosphoserine). The WD 1 repeat unit spans residues 662–700 (ELSSSLSSPSYRFQGILPSSGSEDLLWKWDALKAYQNFV). Residues 1181–1190 (AMTEKSHQSA) are compositionally biased toward basic and acidic residues. Disordered regions lie at residues 1181-1203 (AMTEKSHQSAEELSSQPGDFSEE) and 1221-1256 (YEADSESNPEDGETQDDGVDLKSETEGFSASSSPND). The segment covering 1221–1238 (YEADSESNPEDGETQDDG) has biased composition (acidic residues). Over residues 1246 to 1256 (EGFSASSSPND) the composition is skewed to polar residues. Phosphoserine occurs at positions 1509 and 1510. The stretch at 1582–1626 (SQENIFLPSKWQHLVLTYLQQPQGKRRIHGKISIWVSGQRKPDVT) is one WD 2 repeat. Phosphoserine is present on residues Ser2105, Ser2124, Ser2213, Ser2217, and Ser2264. A compositionally biased stretch (basic and acidic residues) spans 2205 to 2215 (KQLGAEPRSED). The disordered stretch occupies residues 2205–2224 (KQLGAEPRSEDDSPGDESCP). In terms of domain architecture, BEACH-type PH spans 3009 to 3115 (AASESIRVNR…VRDDVYHNIL (107 aa)). Residues 3120–3422 (PNLLEYGNIT…QLFHMAHVSR (303 aa)) enclose the BEACH domain. 5 WD repeats span residues 3563–3602 (SQQYQVTSCAWVPDSCQLFTGSKCGVITAYTNRFTSSTPS), 3614–3653 (GHTEEITSLFVCKPYSILISVSRDGTCIIWDLNRLCYVQS), 3656–3699 (GHKS…VGHV), 3700–3744 (HCRE…PVRE), and 3749–3788 (KSNKPIISLTFSCDGHHLYTANSDGTVIAWCRKDQQRLKQ).

In terms of assembly, interacts with CPAP, LIP8 and ZNF521. Abundantly expressed in adult and fetal thymus, peripheral blood leukocytes, bone marrow and several regions of the adult brain.

The protein resides in the cytoplasm. Its function is as follows. Adapter protein that regulates and/or fission of intracellular vesicles such as lysosomes. Might regulate trafficking of effectors involved in exocytosis. In cytotoxic T-cells and natural killer (NK) cells, has role in the regulation of size, number and exocytosis of lytic granules. In macrophages and dendritic cells, regulates phagosome maturation by controlling the conversion of early phagosomal compartments into late phagosomes. In macrophages and dendritic cells, specifically involved in TLR3- and TLR4-induced production of pro-inflammatory cytokines by regulating the endosomal TLR3- TICAM1/TRIF and TLR4- TICAM1/TRIF signaling pathways. In Homo sapiens (Human), this protein is Lysosomal-trafficking regulator (LYST).